The following is a 261-amino-acid chain: Cytochrome c oxidase subunit 3 (261 aa).

Over 1 to 15 the chain is Mitochondrial matrix; that stretch reads MTHQTHAYHMVNPSP. Residues 16 to 34 form a helical membrane-spanning segment; the sequence is WPLTGALSALLMTSGLIMW. The Mitochondrial intermembrane segment spans residues 35-40; the sequence is FHFNST. Residues 41 to 66 form a helical membrane-spanning segment; sequence TLLMLGLTTNMLTMYQWWRDVVREST. Topologically, residues 67–72 are mitochondrial matrix; sequence FQGHHT. Residues 73–105 traverse the membrane as a helical segment; it reads PNVQKGLRYGMILFIISEVLFFTGFFWAFYHSS. The Mitochondrial intermembrane portion of the chain corresponds to 106–128; it reads LAPTPELGGCWPPTGIHPLNPLE. Residues 129-152 form a helical membrane-spanning segment; that stretch reads VPLLNTSVLLASGVSITWAHHSLM. Over 153 to 155 the chain is Mitochondrial matrix; the sequence is EGN. A helical transmembrane segment spans residues 156 to 183; that stretch reads RNHMLQALFITIALGVYFTLLQASEYYE. The Mitochondrial intermembrane segment spans residues 184–190; it reads APFTISD. The chain crosses the membrane as a helical span at residues 191 to 223; it reads GVYGSTFFVATGFHGLHVIIGSTFLIVCFFRQL. Topologically, residues 224-232 are mitochondrial matrix; sequence KFHFTSNHH. Residues 233 to 256 form a helical membrane-spanning segment; that stretch reads FGFEAAAWYWHFVDVVWLFLYVSI. Over 257–261 the chain is Mitochondrial intermembrane; sequence YWWGS.

It belongs to the cytochrome c oxidase subunit 3 family. In terms of assembly, component of the cytochrome c oxidase (complex IV, CIV), a multisubunit enzyme composed of 14 subunits. The complex is composed of a catalytic core of 3 subunits MT-CO1, MT-CO2 and MT-CO3, encoded in the mitochondrial DNA, and 11 supernumerary subunits COX4I, COX5A, COX5B, COX6A, COX6B, COX6C, COX7A, COX7B, COX7C, COX8 and NDUFA4, which are encoded in the nuclear genome. The complex exists as a monomer or a dimer and forms supercomplexes (SCs) in the inner mitochondrial membrane with NADH-ubiquinone oxidoreductase (complex I, CI) and ubiquinol-cytochrome c oxidoreductase (cytochrome b-c1 complex, complex III, CIII), resulting in different assemblies (supercomplex SCI(1)III(2)IV(1) and megacomplex MCI(2)III(2)IV(2)).

The protein resides in the mitochondrion inner membrane. It carries out the reaction 4 Fe(II)-[cytochrome c] + O2 + 8 H(+)(in) = 4 Fe(III)-[cytochrome c] + 2 H2O + 4 H(+)(out). In terms of biological role, component of the cytochrome c oxidase, the last enzyme in the mitochondrial electron transport chain which drives oxidative phosphorylation. The respiratory chain contains 3 multisubunit complexes succinate dehydrogenase (complex II, CII), ubiquinol-cytochrome c oxidoreductase (cytochrome b-c1 complex, complex III, CIII) and cytochrome c oxidase (complex IV, CIV), that cooperate to transfer electrons derived from NADH and succinate to molecular oxygen, creating an electrochemical gradient over the inner membrane that drives transmembrane transport and the ATP synthase. Cytochrome c oxidase is the component of the respiratory chain that catalyzes the reduction of oxygen to water. Electrons originating from reduced cytochrome c in the intermembrane space (IMS) are transferred via the dinuclear copper A center (CU(A)) of subunit 2 and heme A of subunit 1 to the active site in subunit 1, a binuclear center (BNC) formed by heme A3 and copper B (CU(B)). The BNC reduces molecular oxygen to 2 water molecules using 4 electrons from cytochrome c in the IMS and 4 protons from the mitochondrial matrix. The chain is Cytochrome c oxidase subunit 3 (MT-CO3) from Gazella cuvieri (Cuvier's gazelle).